Here is a 78-residue protein sequence, read N- to C-terminus: Small integral membrane protein 1 (78 aa).

N-acetylmethionine is present on Met-1. The disordered stretch occupies residues 1–22; it reads MQSQESGVHYSRWDSSSRDEVS. At 1–48 the chain is on the cytoplasmic side; it reads MQSQESGVHYSRWDSSSRDEVSMTAMSSSEEASCYRRISQKLCSGKLG. 4 positions are modified to phosphoserine: Ser-6, Ser-17, Ser-22, and Ser-27. The span at 11–21 shows a compositional bias: basic and acidic residues; sequence SRWDSSSRDEV. Residues 49 to 69 traverse the membrane as a helical; Signal-anchor for type II membrane protein segment; sequence IAMKVLGGVALFWIIFILGYI. Residues 70–78 are Extracellular-facing; the sequence is TGYYVHKCK.

This sequence belongs to the SMIM1 family. Homooligomer; disulfide-linked.

It localises to the cell membrane. In terms of biological role, regulator of red blood cell formation. This Mus musculus (Mouse) protein is Small integral membrane protein 1.